A 409-amino-acid chain; its full sequence is LL-diaminopimelate aminotransferase (409 aa).

Tyrosine 15 and glycine 42 together coordinate substrate. Residues tyrosine 72, serine 108–lysine 109, tyrosine 132, asparagine 187, tyrosine 218, and serine 246–serine 248 contribute to the pyridoxal 5'-phosphate site. Substrate-binding residues include lysine 109, tyrosine 132, and asparagine 187. Lysine 249 carries the post-translational modification N6-(pyridoxal phosphate)lysine. Arginine 257 and asparagine 292 together coordinate pyridoxal 5'-phosphate. Asparagine 292 and arginine 388 together coordinate substrate.

Belongs to the class-I pyridoxal-phosphate-dependent aminotransferase family. LL-diaminopimelate aminotransferase subfamily. In terms of assembly, homodimer. Pyridoxal 5'-phosphate is required as a cofactor.

It catalyses the reaction (2S,6S)-2,6-diaminopimelate + 2-oxoglutarate = (S)-2,3,4,5-tetrahydrodipicolinate + L-glutamate + H2O + H(+). It participates in amino-acid biosynthesis; L-lysine biosynthesis via DAP pathway; LL-2,6-diaminopimelate from (S)-tetrahydrodipicolinate (aminotransferase route): step 1/1. In terms of biological role, involved in the synthesis of meso-diaminopimelate (m-DAP or DL-DAP), required for both lysine and peptidoglycan biosynthesis. Catalyzes the direct conversion of tetrahydrodipicolinate to LL-diaminopimelate. The protein is LL-diaminopimelate aminotransferase of Heliobacterium modesticaldum (strain ATCC 51547 / Ice1).